The primary structure comprises 684 residues: Chaperone protein HtpG (684 aa).

The interval 1–329 is a; substrate-binding; sequence MSKKGTIGVT…SPDIPLNVSR (329 aa). The b stretch occupies residues 330-548; it reads SYLQSDANVK…FMRRMRDMAQ (219 aa). The tract at residues 549–684 is c; that stretch reads LQPGMSFYGE…EFIRRSQRLL (136 aa).

Belongs to the heat shock protein 90 family. In terms of assembly, homodimer.

The protein localises to the cytoplasm. In terms of biological role, molecular chaperone. Has ATPase activity. This Porphyromonas gingivalis (strain ATCC 33277 / DSM 20709 / CIP 103683 / JCM 12257 / NCTC 11834 / 2561) protein is Chaperone protein HtpG.